A 393-amino-acid chain; its full sequence is CCCH-type zinc finger protein oma-2 (393 aa).

The disordered stretch occupies residues 1 to 26 (MDMLKENVIQNNEARTESSVEPSHPD). The segment covering 14-26 (ARTESSVEPSHPD) has biased composition (basic and acidic residues). 2 consecutive C3H1-type zinc fingers follow at residues 105 to 133 (SYKT…HGEE) and 147 to 175 (KYRT…HPDN). 2 disordered regions span residues 227 to 251 (TPDE…RYEL) and 311 to 340 (KQST…LTAA). Positions 313–340 (STPGGVSGYSSSGSTPSQDSDSSPLTAA) are enriched in low complexity. The residue at position 327 (Thr327) is a Phosphothreonine; by GSK3.

As to expression, exclusively expressed in the hermaphrodite gonad. Expression only in cellulized oocytes. Widely distributed throughout gonadal oocytes from the mitotic stage to the developing diakinesis stage.

It localises to the cytoplasm. The protein localises to the cytoplasmic granule. It is found in the cytoskeleton. The protein resides in the microtubule organizing center. Its subcellular location is the centrosome. Zinc-finger RNA-binding protein that binds to 5'-UA[AU]-3' motifs in the 3'-UTR of maternal mRNAs to suppress translation in oocytes and embryos. Acts redundantly with oma-1 to control the temporal expression and distribution of maternal proteins and thereby promote meiotic progression, oocyte maturation, fertilization and embryonic development. Also, together with oma-1, is involved in P-granule distribution during embryonic development. The polypeptide is CCCH-type zinc finger protein oma-2 (Caenorhabditis elegans).